A 207-amino-acid chain; its full sequence is Ion-translocating oxidoreductase complex subunit G (207 aa).

Residues 11–31 form a helical membrane-spanning segment; the sequence is GILLGFIALLCTIISAGIFFL. An FMN phosphoryl threonine modification is found at Thr175.

Belongs to the RnfG family. The complex is composed of six subunits: RnfA, RnfB, RnfC, RnfD, RnfE and RnfG. The cofactor is FMN.

It localises to the cell inner membrane. Part of a membrane-bound complex that couples electron transfer with translocation of ions across the membrane. This is Ion-translocating oxidoreductase complex subunit G from Haemophilus influenzae (strain ATCC 51907 / DSM 11121 / KW20 / Rd).